The sequence spans 847 residues: DNA ligase (847 aa).

A compositionally biased stretch (low complexity) spans 1–22; the sequence is MSDTTTGSDAADAAVPATTPAD. The tract at residues 1 to 23 is disordered; sequence MSDTTTGSDAADAAVPATTPADL. NAD(+) is bound by residues 54 to 58, 104 to 105, and Glu-135; these read DAEYD and SL. Lys-137 (N6-AMP-lysine intermediate) is an active-site residue. NAD(+) is bound by residues Arg-158, Glu-195, Lys-326, and Lys-350. Positions 444, 447, 463, and 469 each coordinate Zn(2+). The BRCT domain occupies 686–775; that stretch reads AAGGVLAGLA…PDAIALPEAD (90 aa). The tract at residues 770-847 is disordered; that stretch reads ALPEADPVPD…AEPDGPAETP (78 aa). Composition is skewed to low complexity over residues 786–807 and 819–833; these read DGGSAEDATAATAGAAEAATAE and PAAAAAAPPTDVEAG.

Belongs to the NAD-dependent DNA ligase family. LigA subfamily. It depends on Mg(2+) as a cofactor. Requires Mn(2+) as cofactor.

The catalysed reaction is NAD(+) + (deoxyribonucleotide)n-3'-hydroxyl + 5'-phospho-(deoxyribonucleotide)m = (deoxyribonucleotide)n+m + AMP + beta-nicotinamide D-nucleotide.. DNA ligase that catalyzes the formation of phosphodiester linkages between 5'-phosphoryl and 3'-hydroxyl groups in double-stranded DNA using NAD as a coenzyme and as the energy source for the reaction. It is essential for DNA replication and repair of damaged DNA. The sequence is that of DNA ligase from Clavibacter sepedonicus (Clavibacter michiganensis subsp. sepedonicus).